The primary structure comprises 392 residues: Odorant receptor 85f (392 aa).

At 1–36 (MEPVQYSYEDFARLPTTVFWIMGYDMLGVPKTRSRR) the chain is on the cytoplasmic side. A helical membrane pass occupies residues 37-57 (ILYWIYRFLCLASHGVCVGVM). At 58-69 (VFRMVEAKTIDN) the chain is on the extracellular side. N69 carries N-linked (GlcNAc...) asparagine glycosylation. The helical transmembrane segment at 70 to 90 (VSLIMRYATLVTYIINSDTKF) threads the bilayer. The Cytoplasmic portion of the chain corresponds to 91-130 (ATVLQRSAIQSLNSKLAELYPKTTLDRIYHRVNDHYWTKS). The helical transmembrane segment at 131–151 (FVYLVIIYIGSSIMVVIGPII) threads the bilayer. Topologically, residues 152 to 179 (TSIIAYFTHNVFTYMHCYPYFLYDPEKD) are extracellular. A helical membrane pass occupies residues 180-200 (PVWIYISIYALEWLHSTQMVI). The Cytoplasmic segment spans residues 201–268 (SNIGADIWLL…NDLNGIFGKS (68 aa)). Residues 269–289 (LLLSLLTTAAVICTVAVYTLI) form a helical membrane-spanning segment. The Extracellular segment spans residues 290–295 (QGPTLE). The chain crosses the membrane as a helical span at residues 296–316 (GFTYVIFIGTSVMQVYLVCYY). Residues 317–363 (GQQVLDLSGEVAHAVYNHDFHDASIAYKRYLLIIIIRAQQPVELNAM) are Cytoplasmic-facing. The chain crosses the membrane as a helical span at residues 364 to 384 (GYLSISLDTFKQLMSVSYRVI). The Extracellular portion of the chain corresponds to 385 to 392 (TMLMQMIQ).

The protein belongs to the insect chemoreceptor superfamily. Heteromeric odorant receptor channel (TC 1.A.69) family. Or49a subfamily. In terms of assembly, interacts with Orco. Complexes exist early in the endomembrane system in olfactory sensory neurons (OSNs), coupling these complexes to the conserved ciliary trafficking pathway. Expressed in olfactory sensory neurons in the antenna.

The protein localises to the cell membrane. Its function is as follows. Odorant receptor which mediates acceptance or avoidance behavior, depending on its substrates. The odorant receptor repertoire encodes a large collection of odor stimuli that vary widely in identity, intensity, and duration. May form a complex with Orco to form odorant-sensing units, providing sensitive and prolonged odorant signaling and calcium permeability. In Drosophila melanogaster (Fruit fly), this protein is Odorant receptor 85f (Or85f).